Here is a 103-residue protein sequence, read N- to C-terminus: Flagellar hook-basal body complex protein FliE (103 aa).

Belongs to the FliE family.

Its subcellular location is the bacterial flagellum basal body. The sequence is that of Flagellar hook-basal body complex protein FliE from Yersinia enterocolitica serotype O:8 / biotype 1B (strain NCTC 13174 / 8081).